The following is a 355-amino-acid chain: Protein RecA (355 aa).

67–74 (GPESSGKT) is an ATP binding site.

This sequence belongs to the RecA family.

It localises to the cytoplasm. Can catalyze the hydrolysis of ATP in the presence of single-stranded DNA, the ATP-dependent uptake of single-stranded DNA by duplex DNA, and the ATP-dependent hybridization of homologous single-stranded DNAs. It interacts with LexA causing its activation and leading to its autocatalytic cleavage. The polypeptide is Protein RecA (Shewanella piezotolerans (strain WP3 / JCM 13877)).